A 125-amino-acid chain; its full sequence is Large ribosomal subunit protein bL12 (125 aa).

Belongs to the bacterial ribosomal protein bL12 family. In terms of assembly, homodimer. Part of the ribosomal stalk of the 50S ribosomal subunit. Forms a multimeric L10(L12)X complex, where L10 forms an elongated spine to which 2 to 4 L12 dimers bind in a sequential fashion. Binds GTP-bound translation factors.

Its function is as follows. Forms part of the ribosomal stalk which helps the ribosome interact with GTP-bound translation factors. Is thus essential for accurate translation. The polypeptide is Large ribosomal subunit protein bL12 (Campylobacter curvus (strain 525.92)).